Consider the following 322-residue polypeptide: Nuclease 1, mitochondrial (322 aa).

The active-site Proton acceptor is the His-142. Asn-174 is a Mg(2+) binding site.

It belongs to the DNA/RNA non-specific endonuclease family. In terms of assembly, homodimer. Mn(2+) is required as a cofactor. The cofactor is Mg(2+).

The protein localises to the mitochondrion inner membrane. In terms of biological role, this enzyme has both RNase and DNase activity. It degrades single-stranded DNA and RNA. The protein is Nuclease 1, mitochondrial (pnu1) of Schizosaccharomyces pombe (strain 972 / ATCC 24843) (Fission yeast).